Consider the following 544-residue polypeptide: O-phosphoserine--tRNA(Cys) ligase (544 aa).

Substrate-binding positions include 194 to 196 (HMT), 239 to 241 (SAS), 281 to 282 (YY), and asparagine 335.

The protein belongs to the class-II aminoacyl-tRNA synthetase family. O-phosphoseryl-tRNA(Cys) synthetase subfamily. Homotetramer. Interacts with SepCysS.

It catalyses the reaction tRNA(Cys) + O-phospho-L-serine + ATP = O-phospho-L-seryl-tRNA(Cys) + AMP + diphosphate. Functionally, catalyzes the attachment of O-phosphoserine (Sep) to tRNA(Cys). The sequence is that of O-phosphoserine--tRNA(Cys) ligase from Methanopyrus kandleri (strain AV19 / DSM 6324 / JCM 9639 / NBRC 100938).